Reading from the N-terminus, the 285-residue chain is MTNHDLASLSQTIETAFEGRDAVNTGTRGAVRDAVETALNLLDSGKVRVAERSEDGTWTVNQWLKKAVLLSFRLNPMELVRGGPGEAVWWDKVASKFDGWSVNEFEKAGFRAVPNCVVRRSAYIAPNAVLMPSFVNLGAYVGEGTMVDTWATVGSCAQIGKNVHLSGGVGIGGVLEPMQAGPTIIEDNCFIGARSEVVEGCIVREGSVLGMGVFIGKSTKIVDRATGEVMYGEVPPYSVVVAGSMASGSTMANGQPAPNLYCAVIVKRVDEKTRSKTGINELLRD.

2 residues coordinate substrate: Arg-111 and Asp-148.

Belongs to the transferase hexapeptide repeat family. Homotrimer.

Its subcellular location is the cytoplasm. It carries out the reaction (S)-2,3,4,5-tetrahydrodipicolinate + succinyl-CoA + H2O = (S)-2-succinylamino-6-oxoheptanedioate + CoA. It participates in amino-acid biosynthesis; L-lysine biosynthesis via DAP pathway; LL-2,6-diaminopimelate from (S)-tetrahydrodipicolinate (succinylase route): step 1/3. The sequence is that of 2,3,4,5-tetrahydropyridine-2,6-dicarboxylate N-succinyltransferase from Rhizobium meliloti (strain 1021) (Ensifer meliloti).